A 1905-amino-acid polypeptide reads, in one-letter code: Transport and Golgi organization protein 1 homolog (1905 aa).

The first 22 residues, 1–22 (MAAAQGLLFWLLLLGPPCRVPG), serve as a signal peptide directing secretion. The Lumenal segment spans residues 23–1141 (QPEQDPGRRF…EPASVTPLEN (1119 aa)). The 63-residue stretch at 45–107 (MLMYRGEALE…PKDLIQVVHE (63 aa)) folds into the SH3 domain. The span at 154–167 (SEKVKEKTAQRVEE) shows a compositional bias: basic and acidic residues. Disordered regions lie at residues 154 to 259 (SEKV…HEQE) and 313 to 621 (TVGK…IKDR). Asparagine 173 carries N-linked (GlcNAc...) asparagine glycosylation. Positions 173 to 190 (NESDAEPEPGEPNSEESE) are enriched in acidic residues. Residues 198–208 (AELRERSEAQK) are compositionally biased toward basic and acidic residues. The span at 209–220 (SHPQVNSQTGHA) shows a compositional bias: polar residues. 2 positions are modified to phosphoserine: serine 226 and serine 229. Over residues 234-245 (LQDKLKVPDSEN) the composition is skewed to basic and acidic residues. Asparagine 246 is a glycosylation site (N-linked (GlcNAc...) asparagine). Positions 246 to 255 (NKTSNSSQVS) are enriched in polar residues. Over residues 317–327 (EEEENKEDFDE) the composition is skewed to acidic residues. Composition is skewed to basic and acidic residues over residues 337–366 (EDTKSPGHSGIEKHPTEKEQNSNKEHKVEE) and 373–386 (KKGDKEIPKHREDT). A compositionally biased stretch (acidic residues) spans 392 to 414 (MEGEENTDTDLESSDSKEEDDPL). Basic and acidic residues-rich tracts occupy residues 419–436 (RLGKPRPEDHTDPEKAAD) and 459–480 (HMKDKGRKVEEPRRDWVQHEVG). Residues 467–527 (VEEPRRDWVQ…ANQENDLKGA (61 aa)) are a coiled coil. Positions 488 to 500 (DQAVQGSSQSGHL) are enriched in polar residues. The segment covering 531–542 (ISKEMLHEEKPS) has biased composition (basic and acidic residues). Asparagine 627 is a glycosylation site (N-linked (GlcNAc...) asparagine). Disordered regions lie at residues 657–908 (QQGG…PHAP), 1036–1059 (APPAAAQPVEGGWDGPAEDTQPPL), and 1085–1118 (PVTRDMGTSGVAQKPQTEEDGDPGIITPQGTPVD). Residues 669-714 (VSEKRELPEEEVTRVTKDASDEGQEVRKTGQTDSIEGRGFRPKEPN) show a composition bias toward basic and acidic residues. Acidic residues predominate over residues 715-730 (PEDEDYSPEELLEDEN). Basic and acidic residues-rich tracts occupy residues 736 to 751 (QSKERSPEIQDKRLDV), 766 to 789 (TDPETEKNKEETRHVSENERKNET), 842 to 859 (SQKKDPDYLKEDNHEGHP), and 868 to 884 (PGVEPSKEDDEHAEKFV). Phosphoserine is present on serine 873. An intramembrane segment occupies 1142–1162 (AIAFIYSLVFHLTKTLLATLP). The Lumenal portion of the chain corresponds to 1163 to 1173 (DDVQPGPDFYG). Residues 1174–1194 (LPWKPVLITASLGIVSFAVFF) form a helical membrane-spanning segment. Over 1195–1905 (WRTVLAVKSR…DCSPALKQSP (711 aa)) the chain is Cytoplasmic. The segment at 1208–1647 (VTEQQISEKL…VIVKPMPGRP (440 aa)) is mediates interaction with MIA2. Positions 1211 to 1393 (QQISEKLKNI…SQKDLEVALT (183 aa)) form a coiled coil. Positions 1416–1443 (SESEDQNKGGSESDELANGEVGGDRSEK) are disordered. Serine 1428 is subject to Phosphoserine. A coiled-coil region spans residues 1484 to 1636 (NLEDQIKKLE…TQKMAMMQEE (153 aa)). The disordered stretch occupies residues 1639–1905 (IVKPMPGRPN…DCSPALKQSP (267 aa)). Polar residues predominate over residues 1647–1664 (PNTQNPPRRGPLSQNGSF). Residues serine 1663, serine 1675, serine 1703, serine 1724, serine 1738, and serine 1742 each carry the phosphoserine modification. Residues 1748–1905 (DEGKVSMAAK…DCSPALKQSP (158 aa)) are proline-rich domain (PRD); mediates interaction with the COPII coat subunits SEC23A and SEC23B. Pro residues predominate over residues 1776 to 1806 (LLPPIRYGPPPQLCGPFGPRPLPPPFGPGMR). Arginine 1781 carries the post-translational modification Asymmetric dimethylarginine. The interval 1785–1845 (PPQLCGPFGP…GHAPFRPLGS (61 aa)) is SEC16A-interacting region (SIR); required for its localization to endoplasmic reticulum exit sites and for its interaction with SEC16A. Positions 1821–1831 (GKRDLPLDPRE) are enriched in basic and acidic residues. Residues serine 1890 and serine 1904 each carry the phosphoserine modification. The segment covering 1891–1905 (QGASQDCSPALKQSP) has biased composition (polar residues).

It belongs to the MIA/OTOR family. Tango1 subfamily. Interacts with MIA2. Interacts (via SH3 domain) with COL7A1. Interacts with the COPII coat subunits SEC23A, SEC23B and maybe SEC24C. May interact with APOB and MIA2. Interacts with SEC16A.

It localises to the endoplasmic reticulum membrane. Plays a role in the transport of cargos that are too large to fit into COPII-coated vesicles and require specific mechanisms to be incorporated into membrane-bound carriers and exported from the endoplasmic reticulum. This protein is required for collagen VII (COL7A1) secretion by loading COL7A1 into transport carriers. It may participate in cargo loading of COL7A1 at endoplasmic reticulum exit sites by binding to COPII coat subunits Sec23/24 and guiding SH3-bound COL7A1 into a growing carrier. Does not play a role in global protein secretion and is apparently specific to COL7A1 cargo loading. However, it may participate in secretion of other proteins in cells that do not secrete COL7A1. It is also specifically required for the secretion of lipoproteins by participating in their export from the endoplasmic reticulum. Required for correct assembly of COPII coat components at endoplasmic reticulum exit sites (ERES) and for the localization of SEC16A and membrane-bound ER-resident complexes consisting of MIA2 and PREB/SEC12 to ERES. This Bos taurus (Bovine) protein is Transport and Golgi organization protein 1 homolog.